Here is a 217-residue protein sequence, read N- to C-terminus: Uracil-DNA glycosylase (217 aa).

The active-site Proton acceptor is the D62.

It belongs to the uracil-DNA glycosylase (UDG) superfamily. UNG family.

It localises to the cytoplasm. The enzyme catalyses Hydrolyzes single-stranded DNA or mismatched double-stranded DNA and polynucleotides, releasing free uracil.. Functionally, excises uracil residues from the DNA which can arise as a result of misincorporation of dUMP residues by DNA polymerase or due to deamination of cytosine. This Streptococcus pneumoniae (strain Hungary19A-6) protein is Uracil-DNA glycosylase.